Consider the following 180-residue polypeptide: Cytokinin-beta-glucosidase 2 (180 aa).

Functionally, hydrolyzes cytokinin glucosides thus liberating free cytokinins. This chain is Cytokinin-beta-glucosidase 2 (ROLC2), found in Linaria vulgaris (Toadflax).